The sequence spans 219 residues: 3-demethoxyubiquinol 3-hydroxylase (219 aa).

Positions 21 to 51 are disordered; sequence RTLTPGTTQAERTPAHAAPAPDAPEAGTLPS. The segment covering 35 to 46 has biased composition (low complexity); it reads AHAAPAPDAPEA. E68, E98, H101, E150, E182, and H185 together coordinate Fe cation.

This sequence belongs to the COQ7 family. The cofactor is Fe cation.

Its subcellular location is the cell membrane. It carries out the reaction a 5-methoxy-2-methyl-3-(all-trans-polyprenyl)benzene-1,4-diol + AH2 + O2 = a 3-demethylubiquinol + A + H2O. The protein operates within cofactor biosynthesis; ubiquinone biosynthesis. In terms of biological role, catalyzes the hydroxylation of 2-nonaprenyl-3-methyl-6-methoxy-1,4-benzoquinol during ubiquinone biosynthesis. The chain is 3-demethoxyubiquinol 3-hydroxylase from Alcanivorax borkumensis (strain ATCC 700651 / DSM 11573 / NCIMB 13689 / SK2).